A 544-amino-acid chain; its full sequence is MTPAELKRLYHIIKVQLEYGLDELLPDHQLTKAPLLMRKSLFWIKNQHPEKPLGERLRLALQELGPVWIKFGQMMSTRRDLFPPHIADPLALLQDQVAPFDGELAKQQMEKALGGPLENWFTEFDIKPLASASIAQVHTARLKDTNQEVVLKVIRPDIRPVIDSDLKLMHRMARIVAGAMPEARRLKPVEVVREYEKTLLDELDLRREAANAIQLRRNFEGSEELYVPEVFPDFSNETVMVSERIYGIQVSDIEGLEANGTNMKLLAERGVSVFFTQVFRDSFFHADMHPGNVFVKPEHPENPMWIGLDCGIVGTLNSEDKRYLAENFLAFFNRDYRRVAELHVDSGWVPADTNVDEFEFAIRIVCEPIFAKPLCEISFGHVLLNLFNTARRFNMEVQPQLVLLQKTLLYVEGLGRQLYPQLDLWETAKPFLEEWMMNQVGPQALVNSIKDRAPFWAEKLPELPELLYDSLKQGKAMNQRMDLLYQGYRQSKRQQATGKFLFGVGATLVVCSAILVDNAYEQLSMASGIAGVTFWLLSWRAYRQ.

The Protein kinase domain occupies 123-501 (EFDIKPLASA…KRQQATGKFL (379 aa)). Residues 129–137 (LASASIAQV) and Lys152 each bind ATP. The Proton acceptor role is filled by Asp287. The next 2 membrane-spanning stretches (helical) occupy residues 496 to 516 (ATGKFLFGVGATLVVCSAILV) and 519 to 539 (AYEQLSMASGIAGVTFWLLSW).

The protein belongs to the ABC1 family. UbiB subfamily.

The protein localises to the cell inner membrane. The protein operates within cofactor biosynthesis; ubiquinone biosynthesis [regulation]. Is probably a protein kinase regulator of UbiI activity which is involved in aerobic coenzyme Q (ubiquinone) biosynthesis. This Vibrio parahaemolyticus serotype O3:K6 (strain RIMD 2210633) protein is Probable protein kinase UbiB.